The sequence spans 103 residues: Large ribosomal subunit protein bL21 (103 aa).

Belongs to the bacterial ribosomal protein bL21 family. As to quaternary structure, part of the 50S ribosomal subunit. Contacts protein L20.

Functionally, this protein binds to 23S rRNA in the presence of protein L20. This Pectobacterium atrosepticum (strain SCRI 1043 / ATCC BAA-672) (Erwinia carotovora subsp. atroseptica) protein is Large ribosomal subunit protein bL21.